A 1027-amino-acid polypeptide reads, in one-letter code: D-2-hydroxyglutarate dehydrogenase (1027 aa).

The FAD-binding PCMH-type domain maps to 48 to 284 (YQQLPQAILF…CEAKLNLLLI (237 aa)). Arg405 and His503 together coordinate (R)-2-hydroxyglutarate. Residues 665 to 696 (HEVKAAMDTCLACKACASQCPIKIDVPSFRAK) form the 4Fe-4S ferredoxin-type domain. Residues Cys674, Cys677, Cys680, and Cys684 each contribute to the [4Fe-4S] cluster site.

This sequence in the N-terminal section; belongs to the FAD-binding oxidoreductase/transferase type 4 family. Homotetramer. The cofactor is [4Fe-4S] cluster. FAD serves as cofactor.

The catalysed reaction is (R)-2-hydroxyglutarate + A = 2-oxoglutarate + AH2. In terms of biological role, catalyzes the oxidation of D-2-hydroxyglutarate (D-2-HGA) to 2-oxoglutarate. Provides the way to recycle D-2-HGA produced during L-serine synthesis by SerA, by converting it back to 2-oxoglutarate. The physiological molecule that functions as the primary electron acceptor during D-2-HGA oxidation is unknown. The chain is D-2-hydroxyglutarate dehydrogenase from Haemophilus influenzae (strain ATCC 51907 / DSM 11121 / KW20 / Rd).